The sequence spans 390 residues: Protein STRICTOSIDINE SYNTHASE-LIKE 3 (390 aa).

An N-terminal signal peptide occupies residues 1–25; the sequence is MAMSILAKIFLVFAIYCAIDPFSHS. Residues Asn95 and Asn108 are each glycosylated (N-linked (GlcNAc...) asparagine).

This sequence belongs to the strictosidine synthase family.

The protein localises to the vacuole. The sequence is that of Protein STRICTOSIDINE SYNTHASE-LIKE 3 from Arabidopsis thaliana (Mouse-ear cress).